Consider the following 410-residue polypeptide: Multifunctional CCA protein (410 aa).

The ATP site is built by Gly-8 and Arg-11. CTP is bound by residues Gly-8 and Arg-11. Asp-21 and Asp-23 together coordinate Mg(2+). Residues Arg-91, Arg-137, and Arg-140 each coordinate ATP. 3 residues coordinate CTP: Arg-91, Arg-137, and Arg-140. The HD domain occupies 225–326 (SGIHTLMTLQ…LNVLKKTDAF (102 aa)).

Belongs to the tRNA nucleotidyltransferase/poly(A) polymerase family. Bacterial CCA-adding enzyme type 1 subfamily. In terms of assembly, monomer. Can also form homodimers and oligomers. Mg(2+) is required as a cofactor. The cofactor is Ni(2+).

It carries out the reaction a tRNA precursor + 2 CTP + ATP = a tRNA with a 3' CCA end + 3 diphosphate. It catalyses the reaction a tRNA with a 3' CCA end + 2 CTP + ATP = a tRNA with a 3' CCACCA end + 3 diphosphate. In terms of biological role, catalyzes the addition and repair of the essential 3'-terminal CCA sequence in tRNAs without using a nucleic acid template. Adds these three nucleotides in the order of C, C, and A to the tRNA nucleotide-73, using CTP and ATP as substrates and producing inorganic pyrophosphate. tRNA 3'-terminal CCA addition is required both for tRNA processing and repair. Also involved in tRNA surveillance by mediating tandem CCA addition to generate a CCACCA at the 3' terminus of unstable tRNAs. While stable tRNAs receive only 3'-terminal CCA, unstable tRNAs are marked with CCACCA and rapidly degraded. The sequence is that of Multifunctional CCA protein from Neisseria gonorrhoeae (strain ATCC 700825 / FA 1090).